The sequence spans 133 residues: Vesicle transport protein GOT1A (133 aa).

Topologically, residues 1–9 are cytoplasmic; the sequence is MISITEWQK. Residues 10–30 traverse the membrane as a helical segment; the sequence is IGVGITGFGVFFILFGILLYF. Position 31 (aspartate 31) is a topological domain, lumenal. The helical transmembrane segment at 32–52 threads the bilayer; it reads SVLLAFGNLLFLTGLSLIIGL. The Cytoplasmic segment spans residues 53-68; sequence RRTFAFFFQRHKLKGT. Residues 69–89 traverse the membrane as a helical segment; that stretch reads SFFLGGVAIVLLRWPLLGMLL. Residues 90–92 lie on the Lumenal side of the membrane; the sequence is EAY. A helical transmembrane segment spans residues 93-113; the sequence is GFISLFKGFFPVVFGFLGSAF. The Cytoplasmic segment spans residues 114-133; the sequence is NIPFLSTLFQKLQGSSSSMV.

The protein belongs to the GOT1 family.

It localises to the golgi apparatus membrane. In terms of biological role, may be involved in fusion of ER-derived transport vesicles with the Golgi complex. This is Vesicle transport protein GOT1A from Mus musculus (Mouse).